We begin with the raw amino-acid sequence, 320 residues long: ATP-dependent 6-phosphofructokinase (320 aa).

Glycine 11 is an ATP binding site. Arginine 21–lysine 25 contributes to the ADP binding site. ATP is bound by residues arginine 72 to phenylalanine 73 and glycine 102 to serine 105. Aspartate 103 contacts Mg(2+). Threonine 125–aspartate 127 contacts substrate. The active-site Proton acceptor is the aspartate 127. Arginine 154 contributes to the ADP binding site. Substrate contacts are provided by residues arginine 162 and methionine 169–arginine 171. ADP-binding positions include glycine 185 to aspartate 187 and lysine 213 to histidine 215. Substrate-binding positions include glutamate 222, arginine 243, and histidine 249–arginine 252.

The protein belongs to the phosphofructokinase type A (PFKA) family. ATP-dependent PFK group I subfamily. Prokaryotic clade 'B1' sub-subfamily. Homotetramer. It depends on Mg(2+) as a cofactor.

The protein resides in the cytoplasm. It catalyses the reaction beta-D-fructose 6-phosphate + ATP = beta-D-fructose 1,6-bisphosphate + ADP + H(+). The protein operates within carbohydrate degradation; glycolysis; D-glyceraldehyde 3-phosphate and glycerone phosphate from D-glucose: step 3/4. Its activity is regulated as follows. Allosterically activated by ADP and other diphosphonucleosides, and allosterically inhibited by phosphoenolpyruvate. Catalyzes the phosphorylation of D-fructose 6-phosphate to fructose 1,6-bisphosphate by ATP, the first committing step of glycolysis. The chain is ATP-dependent 6-phosphofructokinase from Lactobacillus helveticus (strain DPC 4571).